The sequence spans 330 residues: 6-phosphogluconolactonase (330 aa).

The protein belongs to the cycloisomerase 2 family.

The catalysed reaction is 6-phospho-D-glucono-1,5-lactone + H2O = 6-phospho-D-gluconate + H(+). It functions in the pathway carbohydrate degradation; pentose phosphate pathway; D-ribulose 5-phosphate from D-glucose 6-phosphate (oxidative stage): step 2/3. Its function is as follows. Catalyzes the hydrolysis of 6-phosphogluconolactone to 6-phosphogluconate. The sequence is that of 6-phosphogluconolactonase from Erwinia tasmaniensis (strain DSM 17950 / CFBP 7177 / CIP 109463 / NCPPB 4357 / Et1/99).